Consider the following 303-residue polypeptide: MKFGTVWKYYFTESLLKATIRTPSQLNLAPNALRPVLDQLCRLFPQNPTVQIRPIRLAGVRGEEIKAQASATQLIFHIHGGAFFLGSLNTHRALMTDLASRTQMQVIHVDYPLAPEHPYPEAIDAIFDVYQALLVQGIKPKDIIISGDSCGANLALALSLRLKQQPELMPSGLILMSPYLDLTLTSESLRFNQKHDALLSIEALQAGIKHYLTDDIQPGDPRVSPLFDDLDGLPPTLVQVGSKEILLDDSKRFREKAEQADVKVHFKLYTGMWNNFQMFNAWFPEAKQALADIAEFATSLDLD.

The Involved in the stabilization of the negatively charged intermediate by the formation of the oxyanion hole motif lies at 79–81 (HGG). Active-site residues include S149 and E244.

The protein belongs to the 'GDXG' lipolytic enzyme family.

The protein resides in the secreted. This is Esterase (est) from Acinetobacter venetianus (strain ATCC 31012 / DSM 23050 / BCRC 14357 / CCUG 45561 / CIP 110063 / KCTC 2702 / LMG 19082 / RAG-1).